The sequence spans 832 residues: Armadillo segment polarity protein (832 aa).

Residues 1–20 (MSYQMPQNRTMSHNPYNSSD) show a composition bias toward polar residues. A disordered region spans residues 1 to 24 (MSYQMPQNRTMSHNPYNSSDMPMP). 9 ARM repeats span residues 146–185 (NYQDDADLATRAIPELIKLLNDEDQVVVSQAAMMVHQLSK), 188–228 (ASRH…NLSH), 230–269 (RQGLLAIFKSGGIPALVKLLSSPVESVLFYAITTLHNLLL), 272–311 (DGSKMAVRLAGGLQKMVALLQRNNVKFLAIVTDCLQILAY), 356–395 (SSNKPAIVEAGGMQALAMHLGNPSQRLVQNCLWTLRNLSD), 397–434 (ATKVDGLETLLSGLVTVLGSSDVNVVTCAAGILSNLTC), 483–524 (SESA…NLAL), 594–634 (ELNR…ELAV), and 636–675 (KEVAEMIEAEGATAPLTELLNSANEGVATYAAAVLFKMSE). The disordered stretch occupies residues 721–832 (AYEGLYGQGP…QVAAWYDTDL (112 aa)). Low complexity predominate over residues 767 to 777 (PAGSNPNAGNN).

Belongs to the beta-catenin family.

The protein resides in the cytoplasm. It is found in the cell membrane. It localises to the cell junction. The protein localises to the adherens junction. Its function is as follows. May associate with CadN and participate in the transmission of developmental information. Can associate with alpha-catenin. Accumulates through wg signaling; arm function in wg signal transduction is required early in development for determination of neuroblast fate. Arm and Abl proteins function cooperatively at adherens junctions in both the CNS and epidermis. This Aedes aegypti (Yellowfever mosquito) protein is Armadillo segment polarity protein.